The primary structure comprises 293 residues: MPWIQLKLNTTGANAEELSDALMEAGAVSITFQDTHDTPVFEPLPGETRLWGDTDVIGLFDAETDMKDVVAILEQHPLLGAGFAHKIEQLEDKDWEREWMDNFHPMRFGERLWICPSWRDIPDENAVNVMLDPGLAFGTGTHPTTSLCLQWLDGLDLNGKTVIDFGCGSGILAIAALKLGAAKAIGIDIDPQAIQASRDNAERNGVSDRLELYLPKDQPEAMKADVVVANILAGPLRELAPLISVLPVEGGLLGLSGILASQAESICDAYAELFTLDPVVEKEEWCRITGRKK.

S-adenosyl-L-methionine is bound by residues threonine 145, glycine 166, aspartate 188, and asparagine 230.

The protein belongs to the methyltransferase superfamily. PrmA family.

It localises to the cytoplasm. The enzyme catalyses L-lysyl-[protein] + 3 S-adenosyl-L-methionine = N(6),N(6),N(6)-trimethyl-L-lysyl-[protein] + 3 S-adenosyl-L-homocysteine + 3 H(+). Its function is as follows. Methylates ribosomal protein L11. In Salmonella newport (strain SL254), this protein is Ribosomal protein L11 methyltransferase.